The chain runs to 339 residues: Anthranilate phosphoribosyltransferase (339 aa).

Residues G79, 82–83, T87, 89–92, 107–115, and S119 each bind 5-phospho-alpha-D-ribose 1-diphosphate; these read GD, NIST, and KHGNRAVSS. G79 lines the anthranilate pocket. S91 is a Mg(2+) binding site. Anthranilate is bound at residue N110. Anthranilate is bound at residue R165. The Mg(2+) site is built by D224 and E225.

The protein belongs to the anthranilate phosphoribosyltransferase family. In terms of assembly, homodimer. The cofactor is Mg(2+).

The enzyme catalyses N-(5-phospho-beta-D-ribosyl)anthranilate + diphosphate = 5-phospho-alpha-D-ribose 1-diphosphate + anthranilate. Its pathway is amino-acid biosynthesis; L-tryptophan biosynthesis; L-tryptophan from chorismate: step 2/5. Its function is as follows. Catalyzes the transfer of the phosphoribosyl group of 5-phosphorylribose-1-pyrophosphate (PRPP) to anthranilate to yield N-(5'-phosphoribosyl)-anthranilate (PRA). The protein is Anthranilate phosphoribosyltransferase of Geobacillus thermodenitrificans (strain NG80-2).